The primary structure comprises 564 residues: MQSFRQYRRMRRDLQESIKLHGPYAAAGDRHVQPTDDILEDADDARLEKGIHSMNGHGQSPYSTPGIVLHDGQRVTVPGVNLRRASEICERVNTKTLFIVGFDGPDDQLNPKNWSIGRKWATLGIVGTTGMLVGWASSIDSTVIKQGQEAFGVSEVAESLATALFLFAFGFGSLVAAPFSETVGRNPVYIATLSILMIFTMASGLAPNFGAQLAFRFLAGLFGCTPMTTFGGSMADIFDPMDRTYAFPVCCTLSFLGPFLAPMVGAFIGQSTHISWRWTEWCTLIMAALVTGAIFLFVPETYGPVLLQWKAKQLREITGDPRFMAEIELRQTSLVTRLMHSCSRPFHLFFREIMVALFTMYLVVVYIVLFGFLTGYEFIFGRTYGFTQGSVGLTFIGMNIGFLIAFAMVPHIYFSYKKRLQNAIENGHNGLPPEERLWFAMYGAPWLPISLFWMGWTSYPSISYWSPLVASVAFGFSVQGIFISTYQYLIDTYELFAASALVSATFFRYIAAGAMVIVSIPMYGNLGVHWSLTLLGCISVLMTPVPYIFYKYGHVIRQRNKKTP.

A glycan (N-linked (GlcNAc...) asparagine) is linked at N113. Helical transmembrane passes span 120–140 (WATLGIVGTTGMLVGWASSID), 159–179 (SLATALFLFAFGFGSLVAAPF), 187–207 (PVYIATLSILMIFTMASGLAP), 217–237 (FLAGLFGCTPMTTFGGSMADI), 249–269 (VCCTLSFLGPFLAPMVGAFIG), 278–298 (WTEWCTLIMAALVTGAIFLFV), 353–373 (IMVALFTMYLVVVYIVLFGFL), 389–409 (GSVGLTFIGMNIGFLIAFAMV), 437–457 (LWFAMYGAPWLPISLFWMGWT), 462–482 (ISYWSPLVASVAFGFSVQGIF), 500–520 (ALVSATFFRYIAAGAMVIVSI), and 530–550 (WSLTLLGCISVLMTPVPYIFY).

Belongs to the major facilitator superfamily.

It is found in the cell membrane. In terms of biological role, MFS-type transporter; part of the gene cluster that mediates the biosynthesis of 5-hydroxy-2-hydroxymethyl-1,4-pyrone, also know as kojic acid, a by-product in the fermentation process of malting rice that acts as a chelation agent. Involved in the seretion of kojic acid. The protein is MFS-type transporter kojT of Aspergillus flavus (strain ATCC 200026 / FGSC A1120 / IAM 13836 / NRRL 3357 / JCM 12722 / SRRC 167).